Consider the following 63-residue polypeptide: Protein virE1 (63 aa).

As to quaternary structure, forms heterodimers with virE2 that prevent virE2 anarchic homopolymerization and binding to DNA.

Involved in DNA transformation; controls virE2 polymerization and prevents virE2 binding to DNA. The protein is Protein virE1 (virE1) of Agrobacterium fabrum (strain C58 / ATCC 33970) (Agrobacterium tumefaciens (strain C58)).